Reading from the N-terminus, the 428-residue chain is 3-deoxy-D-manno-octulosonic acid transferase (428 aa).

Catalysis depends on Glu-64, which acts as the Proton acceptor. Residues 274–275, 316–318, and 342–345 contribute to the CMP site; these read PR, LGE, and NLIE.

This sequence belongs to the glycosyltransferase group 1 family. Glycosyltransferase 30 subfamily.

It is found in the cell inner membrane. The catalysed reaction is lipid IVA (E. coli) + CMP-3-deoxy-beta-D-manno-octulosonate = alpha-Kdo-(2-&gt;6)-lipid IVA (E. coli) + CMP + H(+). The protein operates within bacterial outer membrane biogenesis; LPS core biosynthesis. Functionally, involved in lipopolysaccharide (LPS) biosynthesis. Catalyzes the transfer of a single 3-deoxy-D-manno-octulosonate (Kdo) residue from CMP-Kdo to lipid IV(A), the tetraacyldisaccharide-1,4'-bisphosphate precursor of lipid A. This Bordetella pertussis protein is 3-deoxy-D-manno-octulosonic acid transferase (waaA).